The chain runs to 419 residues: Heparan-sulfate 6-O-sulfotransferase 3-B (419 aa).

The Cytoplasmic segment spans residues 1-7; that stretch reads MNDKPNK. Residues 8-28 traverse the membrane as a helical; Signal-anchor for type II membrane protein segment; it reads WIFIPILAILFVMIGYQYVCP. Residues 29-419 are Lumenal-facing; that stretch reads AGGQACHFRT…EDYASQVVRW (391 aa). An N-linked (GlcNAc...) asparagine glycan is attached at Asn-77. Position 101–109 (101–109) interacts with 3'-phosphoadenylyl sulfate; the sequence is HIQKTGGTT. Residues 131-132, Arg-148, Trp-153, and His-158 contribute to the substrate site; that span reads KK. His-158 acts as the Proton acceptor in catalysis. 3'-phosphoadenylyl sulfate contacts are provided by Arg-191 and Ser-199. 2 residues coordinate substrate: His-203 and Trp-210. Residues Asn-270 and Asn-275 are each glycosylated (N-linked (GlcNAc...) asparagine). 323-325 is a 3'-phosphoadenylyl sulfate binding site; the sequence is TQI. Asn-326 is a glycosylation site (N-linked (GlcNAc...) asparagine). 329–330 is a binding site for 3'-phosphoadenylyl sulfate; sequence RA. N-linked (GlcNAc...) asparagine glycans are attached at residues Asn-393 and Asn-402.

It belongs to the sulfotransferase 6 family. As to expression, in early somitogenesis, expressed in presumptive forebrain and midbrain, tail bud and Kupffer's vesicle. During mid-somitogenesis, ubiquitous expression which is strongest in the somites and eye. During late somitogenesis, predominantly expressed in eye, hindbrain and ventral somites. At 24 hours post-fertilization (hpf), restricted to lens and neural retina, brain, otic vesicle and somites. At 36 hpf, brain expression is restricted to telencephalon. At 48 hpf, restricted to telencephalon and pectoral fin.

It localises to the membrane. It carries out the reaction alpha-D-glucosaminyl-[heparan sulfate](n) + 3'-phosphoadenylyl sulfate = 6-sulfo-alpha-D-glucosaminyl-[heparan sulfate](n) + adenosine 3',5'-bisphosphate + H(+). Its function is as follows. 6-O-sulfation enzyme which catalyzes the transfer of sulfate from 3'-phosphoadenosine 5'-phosphosulfate (PAPS) to position 6 of the N-sulfoglucosamine residue (GlcNS) of heparan sulfate. The protein is Heparan-sulfate 6-O-sulfotransferase 3-B of Danio rerio (Zebrafish).